Reading from the N-terminus, the 348-residue chain is UDP-3-O-acylglucosamine N-acyltransferase (348 aa).

Histidine 257 (proton acceptor) is an active-site residue.

Belongs to the transferase hexapeptide repeat family. LpxD subfamily. In terms of assembly, homotrimer.

The catalysed reaction is a UDP-3-O-[(3R)-3-hydroxyacyl]-alpha-D-glucosamine + a (3R)-hydroxyacyl-[ACP] = a UDP-2-N,3-O-bis[(3R)-3-hydroxyacyl]-alpha-D-glucosamine + holo-[ACP] + H(+). It functions in the pathway bacterial outer membrane biogenesis; LPS lipid A biosynthesis. Its function is as follows. Catalyzes the N-acylation of UDP-3-O-acylglucosamine using 3-hydroxyacyl-ACP as the acyl donor. Is involved in the biosynthesis of lipid A, a phosphorylated glycolipid that anchors the lipopolysaccharide to the outer membrane of the cell. The chain is UDP-3-O-acylglucosamine N-acyltransferase from Bartonella henselae (strain ATCC 49882 / DSM 28221 / CCUG 30454 / Houston 1) (Rochalimaea henselae).